The following is a 171-amino-acid chain: Translation initiation factor IF-3 (171 aa).

Belongs to the IF-3 family. As to quaternary structure, monomer.

Its subcellular location is the cytoplasm. Its function is as follows. IF-3 binds to the 30S ribosomal subunit and shifts the equilibrium between 70S ribosomes and their 50S and 30S subunits in favor of the free subunits, thus enhancing the availability of 30S subunits on which protein synthesis initiation begins. The chain is Translation initiation factor IF-3 from Listeria innocua serovar 6a (strain ATCC BAA-680 / CLIP 11262).